Here is a 591-residue protein sequence, read N- to C-terminus: Aspartate--tRNA(Asp/Asn) ligase (591 aa).

E174 provides a ligand contact to L-aspartate. Residues 198–201 (QLFK) are aspartate. R220 provides a ligand contact to L-aspartate. Residues 220–222 (RDE) and Q229 each bind ATP. Residue H450 coordinates L-aspartate. Residue E483 participates in ATP binding. R490 is a binding site for L-aspartate. 535-538 (GLDR) contributes to the ATP binding site.

It belongs to the class-II aminoacyl-tRNA synthetase family. Type 1 subfamily. As to quaternary structure, homodimer.

Its subcellular location is the cytoplasm. The catalysed reaction is tRNA(Asx) + L-aspartate + ATP = L-aspartyl-tRNA(Asx) + AMP + diphosphate. Functionally, aspartyl-tRNA synthetase with relaxed tRNA specificity since it is able to aspartylate not only its cognate tRNA(Asp) but also tRNA(Asn). Reaction proceeds in two steps: L-aspartate is first activated by ATP to form Asp-AMP and then transferred to the acceptor end of tRNA(Asp/Asn). The protein is Aspartate--tRNA(Asp/Asn) ligase of Pseudomonas fluorescens (strain SBW25).